The sequence spans 130 residues: Small ribosomal subunit protein uS8 (130 aa).

Belongs to the universal ribosomal protein uS8 family.

This Kluyveromyces marxianus (Yeast) protein is Small ribosomal subunit protein uS8 (RPS22).